A 788-amino-acid chain; its full sequence is Integrin beta-3 (788 aa).

Residues 1–26 form the signal peptide; it reads MRARPRPRPLWATVLALGALAGVGVG. Over 27 to 718 the chain is Extracellular; that stretch reads GPNICTTRGV…EEPECPKGPD (692 aa). A PSI domain is found at 30–76; it reads ICTTRGVSSCQQCLAVSPMCAWCSDEALPLGSPRCDLKENLLKDNCA. Intrachain disulfides connect C31–C49, C39–C461, C42–C64, C52–C75, C203–C210, C258–C299, C400–C412, C432–C459, C463–C483, C474–C486, C488–C497, C499–C529, C512–C527, C521–C532, C534–C547, C549–C570, C554–C568, C562–C573, and C575–C584. N125 is a glycosylation site (N-linked (GlcNAc...) asparagine). Residues 135 to 377 enclose the VWFA domain; it reads DYPVDIYYLM…QLIVDAYGKI (243 aa). Positions 147 and 149 each coordinate Mg(2+). Ca(2+) is bound by residues S149, D152, D153, and D184. An involved in CX3CL1-, NRG1-, FGF1- and IGF1-binding region spans residues 203-210; it reads CYDMKTTC. N241, D243, P245, E246, and D277 together coordinate Ca(2+). Residue E246 coordinates Mg(2+). Positions 293–313 are CX3CL1-binding; the sequence is QPNDGQCHVGSDNHYSASTTM. N346 carries an N-linked (GlcNAc...) asparagine glycan. M361 serves as a coordination point for Ca(2+). Residue N397 is glycosylated (N-linked (GlcNAc...) asparagine). I-EGF domains lie at 463 to 498, 499 to 548, 549 to 585, and 586 to 625; these read CQAQAEPNSHRCNNGNGTFECGVCRCGPGWLGSQCE, CSEE…KYCE, CDDFSCVRYKGEMCSGHGQCSCGDCLCDSDWTGYYCN, and CTTRTDTCMSSNGLLCSGRGKCECGSCVCIQPGSYGDTCE. N478 is a glycosylation site (N-linked (GlcNAc...) asparagine). N585 is a glycosylation site (N-linked (GlcNAc...) asparagine). 9 disulfides stabilise this stretch: C586–C609, C593–C607, C601–C612, C614–C624, C627–C630, C634–C681, C640–C661, C643–C657, and C689–C713. N-linked (GlcNAc...) asparagine glycosylation occurs at N680. The chain crosses the membrane as a helical span at residues 719-741; the sequence is ILVVLLSVMGAILLIGLAALLIW. Residues 742 to 788 are Cytoplasmic-facing; it reads KLLITIHDRKEFAKFEEERARAKWDTANNPLYKEATSTFTNITYRGT. T767 is subject to Phosphothreonine. Y773 is subject to Phosphotyrosine. The LIR signature appears at 777–783; the sequence is TSTFTNI. T779 carries the phosphothreonine; by PDPK1 and PKB/AKT1; in vitro modification. The residue at position 785 (Y785) is a Phosphotyrosine.

This sequence belongs to the integrin beta chain family. Heterodimer of an alpha and a beta subunit. Beta-3 (ITGB3) associates with either alpha-IIb (ITGA2B) or alpha-V (ITGAV). Isoform Beta-3C interacts with FLNB. Interacts with COMP. Interacts with PDIA6 following platelet stimulation. Interacts with SYK; upon activation by ITGB3 promotes platelet adhesion. Interacts with MYO10. Interacts with DAB2. Interacts with FERMT2. Interacts with EMP2; regulates the levels of the heterodimer ITGA5:ITGB3 integrin expression on the plasma membrane. Integrin ITGAV:ITGB3 interacts with FBLN5 (via N-terminus). ITGAV:ITGB3 interacts with CCN3. ITGAV:ITGB3 and ITGA2B:ITGB3 interact with SELP (via C-type lectin domain); the interaction mediates cell-cell interaction and adhesion. ITGAV:ITGB3 is found in a ternary complex with CX3CR1 and CX3CL1. ITGAV:ITGB3 is found in a ternary complex with NRG1 and ERBB3. ITGAV:ITGB3 is found in a ternary complex with FGF1 and FGFR1. ITGAV:ITGB3 interacts with FGF2; it is likely that FGF2 can simultaneously bind ITGAV:ITGB3 and FGF receptors. ITGAV:ITGB3 binds to IL1B. ITGAV:ITGB3 is found in a ternary complex with IGF1 and IGF1R. ITGAV:ITGB3 interacts with IGF2. ITGAV:ITGB3 interacts with FBN1. ITGAV:ITGB3 interacts with CD9, CD81 and CD151 (via second extracellular domain). Interacts (via the allosteric site (site 2)) with CXCL12 in a CXCR4-independent manner. Interacts with MXRA8/DICAM; the interaction inhibits ITGAV:ITGB3 heterodimer formation. ITGAV:ITGB3 interacts with PTN. Forms a complex with PTPRZ1 and PTN that stimulates endothelial cell migration through ITGB3 Tyr-773 phosphorylation. ITGAV:ITGB3 interacts with SLC6A4. Interacts with SLC6A4 (via C-terminus); this interaction regulates SLC6A4 trafficking. ITGA2B:ITGB3 interacts with PPIA/CYPA; the interaction is ROS and PPIase activity-dependent and is increased in the presence of thrombin. Interacts with tensin TNS3; TNS3 also interacts with PEAK1, thus acting as an adapter molecule to bridge the association of PEAK1 with ITGB3. Interacts with TM4SF19. In terms of assembly, (Microbial infection) Integrin ITGAV:ITGB3 interacts with herpes virus 8/HHV-8 glycoprotein B. As to quaternary structure, (Microbial infection) Integrin ITGAV:ITGB3 interacts with coxsackievirus A9 capsid proteins. (Microbial infection) Interacts with Hantaan virus glycoprotein G. In terms of assembly, (Microbial infection) Integrin ITGAV:ITGB3 interacts with cytomegalovirus/HHV-5 gH:gL proteins. As to quaternary structure, (Microbial infection) Integrin ITGA5:ITGB3 interacts with human metapneumovirus fusion protein. (Microbial infection) Integrin ITGAV:ITGB3 interacts with human parechovirus 1 capsid proteins. In terms of assembly, (Microbial infection) Integrin ITGAV:ITGB3 interacts with west nile virus envelope protein E. As to quaternary structure, (Microbial infection) Interacts with HIV-1 Tat. ITGAV:ITGB3 interacts with AGRA2. In terms of processing, phosphorylated on tyrosine residues in response to thrombin-induced platelet aggregation. Probably involved in outside-in signaling. A peptide (AA 740-762) is capable of binding GRB2 only when both Tyr-773 and Tyr-785 are phosphorylated. Phosphorylation of Thr-779 inhibits SHC binding. In terms of tissue distribution, isoform beta-3A and isoform beta-3C are widely expressed. Isoform beta-3A is specifically expressed in osteoblast cells; isoform beta-3C is specifically expressed in prostate and testis.

It localises to the cell membrane. The protein resides in the cell projection. Its subcellular location is the lamellipodium membrane. The protein localises to the cell junction. It is found in the focal adhesion. It localises to the postsynaptic cell membrane. The protein resides in the synapse. Functionally, integrin alpha-V/beta-3 (ITGAV:ITGB3) is a receptor for cytotactin, fibronectin, laminin, matrix metalloproteinase-2, osteopontin, osteomodulin, prothrombin, thrombospondin, vitronectin and von Willebrand factor. Integrin alpha-IIb/beta-3 (ITGA2B:ITGB3) is a receptor for fibronectin, fibrinogen, plasminogen, prothrombin, thrombospondin and vitronectin. Integrins alpha-IIb/beta-3 and alpha-V/beta-3 recognize the sequence R-G-D in a wide array of ligands. Integrin alpha-IIb/beta-3 recognizes the sequence H-H-L-G-G-G-A-K-Q-A-G-D-V in fibrinogen gamma chain. Following activation integrin alpha-IIb/beta-3 brings about platelet/platelet interaction through binding of soluble fibrinogen. This step leads to rapid platelet aggregation which physically plugs ruptured endothelial surface. Fibrinogen binding enhances SELP expression in activated platelets. ITGAV:ITGB3 binds to fractalkine (CX3CL1) and acts as its coreceptor in CX3CR1-dependent fractalkine signaling. ITGAV:ITGB3 binds to NRG1 (via EGF domain) and this binding is essential for NRG1-ERBB signaling. ITGAV:ITGB3 binds to FGF1 and this binding is essential for FGF1 signaling. ITGAV:ITGB3 binds to FGF2 and this binding is essential for FGF2 signaling. ITGAV:ITGB3 binds to IGF1 and this binding is essential for IGF1 signaling. ITGAV:ITGB3 binds to IGF2 and this binding is essential for IGF2 signaling. ITGAV:ITGB3 binds to IL1B and this binding is essential for IL1B signaling. ITGAV:ITGB3 binds to PLA2G2A via a site (site 2) which is distinct from the classical ligand-binding site (site 1) and this induces integrin conformational changes and enhanced ligand binding to site 1. ITGAV:ITGB3 acts as a receptor for fibrillin-1 (FBN1) and mediates R-G-D-dependent cell adhesion to FBN1. In brain, plays a role in synaptic transmission and plasticity. Involved in the regulation of the serotonin neurotransmission, is required to localize to specific compartments within the synapse the serotonin receptor SLC6A4 and for an appropriate reuptake of serotonin. Controls excitatory synaptic strength by regulating GRIA2-containing AMPAR endocytosis, which affects AMPAR abundance and composition. ITGAV:ITGB3 act as a receptor for CD40LG. ITGAV:ITGB3 acts as a receptor for IBSP and promotes cell adhesion and migration to IBSP. (Microbial infection) Integrin ITGAV:ITGB3 acts as a receptor for Herpes virus 8/HHV-8. Its function is as follows. (Microbial infection) Integrin ITGAV:ITGB3 acts as a receptor for Coxsackievirus A9. In terms of biological role, (Microbial infection) Acts as a receptor for Hantaan virus. Functionally, (Microbial infection) Integrin ITGAV:ITGB3 acts as a receptor for Cytomegalovirus/HHV-5. (Microbial infection) Integrin ITGA5:ITGB3 acts as a receptor for Human metapneumovirus. Its function is as follows. (Microbial infection) Integrin ITGAV:ITGB3 acts aP05556s a receptor for Human parechovirus 1. In terms of biological role, (Microbial infection) Integrin ITGAV:ITGB3 acts as a receptor for West nile virus. Functionally, (Microbial infection) In case of HIV-1 infection, the interaction with extracellular viral Tat protein seems to enhance angiogenesis in Kaposi's sarcoma lesions. In Homo sapiens (Human), this protein is Integrin beta-3.